Here is a 463-residue protein sequence, read N- to C-terminus: Lysosomal proton-coupled steroid conjugate and bile acid symporter SLC46A3 (463 aa).

The N-terminal stretch at 1-20 (MKILFVEPAIFLSAFAMTLT) is a signal peptide. The Extracellular portion of the chain corresponds to 21–73 (SPLTTQYVYRRIWEETGNYTFSSDSNISECEKNKSSPIFAFQEEVQKKVSRFN). N-linked (GlcNAc...) asparagine glycosylation is found at asparagine 38, asparagine 46, and asparagine 53. The helical transmembrane segment at 74 to 94 (LQMDISGLIPGLVSTFILLSI) threads the bilayer. The Cytoplasmic segment spans residues 95–101 (SDHYGRK). The chain crosses the membrane as a helical span at residues 102-124 (FPMILSSVGALATSVWLCLLCYF). Residues 125–133 (AFPFQLLIA) lie on the Extracellular side of the membrane. The helical transmembrane segment at 134–156 (STFIGAFCGNYTTFWGACFAYIV) threads the bilayer. Residues 157–170 (DQCKEHKQKTIRIA) lie on the Cytoplasmic side of the membrane. Residues 171–191 (VIDFLLGLVTGLTGLSSGYFI) traverse the membrane as a helical segment. The Extracellular portion of the chain corresponds to 192–197 (RELGFG). Residues 198–218 (WSFLIIAASLAVNLIYILFFL) form a helical membrane-spanning segment. At 219 to 261 (GDPVKECSSQNVTMSCSEGFKNLFYRTYMLFKNASGKRRFLLC) the chain is on the cytoplasmic side. Residues 262–282 (LLLFTTITYFFVVIGIAPIFI) form a helical membrane-spanning segment. Over 283–294 (LYELDSPLCWNE) the chain is Extracellular. Residues 295 to 315 (VFIGYGSALGSASFLTSFLGI) form a helical membrane-spanning segment. Topologically, residues 316-324 (WLFSYCMED) are cytoplasmic. Residues 325 to 345 (IHMAFIGIFTTMTGMVMTAFA) form a helical membrane-spanning segment. Residues 346–347 (ST) lie on the Extracellular side of the membrane. Residues 348–368 (TLMMFLARVPFLFTIVPFSVL) form a helical membrane-spanning segment. Residues 369 to 382 (RSMLSKVVRSTEQG) are Cytoplasmic-facing. Residues 383–403 (ILFACIAFLETLGGVTAVSTF) traverse the membrane as a helical segment. The Extracellular segment spans residues 404–415 (NGIYSATVAWYP). Residues 416-436 (GFTFLLSAGLLLLPAISLCVV) traverse the membrane as a helical segment. Topologically, residues 437–463 (KCTSWNEGSYELLIQEESSEDASDRAC) are cytoplasmic. The Tyrosine-based lysosomal-sorting motif signature appears at 446–449 (YELL).

Belongs to the major facilitator superfamily. SLC46A family.

The protein localises to the lysosome membrane. The catalysed reaction is estrone 3-sulfate(out) + n H(+)(out) = estrone 3-sulfate(in) + n H(+)(in). It catalyses the reaction 25-hydroxyvitamin D3 sulfate(out) + n H(+)(out) = 25-hydroxyvitamin D3 sulfate(in) + n H(+)(in). The enzyme catalyses cholate(out) + n H(+)(out) = cholate(in) + n H(+)(in). It carries out the reaction glycocholate(out) + n H(+)(out) = glycocholate(in) + n H(+)(in). The catalysed reaction is taurocholate(out) + n H(+)(out) = taurocholate(in) + n H(+)(in). It catalyses the reaction dehydroepiandrosterone 3-sulfate(out) + n H(+)(out) = dehydroepiandrosterone 3-sulfate(in) + n H(+)(in). The enzyme catalyses N-acetyl-D-muramoyl-L-alanyl-D-isoglutamine(out) + n H(+)(out) = N-acetyl-D-muramoyl-L-alanyl-D-isoglutamine(in) + n H(+)(in). It carries out the reaction 2',3'-cGAMP(out) + n H(+)(out) = 2',3'-cGAMP(in) + n H(+)(in). In terms of biological role, lysosomal proton-coupled steroid conjugate and bile acid transporter. Preferentially recognizes lipophilic steroid conjugates or bile acis as endogenous substrates and seems to mediate escape from lysosomes to the cytoplasm. Modulates hepatic cytosolic copper homeostasis, maybe acting as a lysosomal copper transporter and sequestering copper ions in the lysosome. Delivers pathogen-associated molecular patterns to cytosolic pattern recognition receptors as part of the innate immune response to microbes. Selectively transports bacterial muramyl dipeptide (MDP) into the cytosol for recognition by NOD2, triggering inflammatory responses. Likely acts as a redundant importer of cyclic GMP-AMP dinucleotides (cGAMPs) in monocyte and macrophage cell lineages. The transport mechanism, its electrogenicity and stoichiometry remain to be elucidated. In Pongo abelii (Sumatran orangutan), this protein is Lysosomal proton-coupled steroid conjugate and bile acid symporter SLC46A3 (SLC46A3).